The following is a 678-amino-acid chain: RNA helicase NPH-II (678 aa).

One can recognise a Helicase ATP-binding domain in the interval Phe-175–His-351. ATP is bound at residue Gly-188–Thr-195. The DEXH box signature appears at Asp-300 to His-303. The Helicase C-terminal domain occupies Pro-371–Leu-546.

The protein belongs to the DEAD box helicase family. DEAH subfamily. Monomer.

It localises to the virion. The enzyme catalyses ATP + H2O = ADP + phosphate + H(+). Its function is as follows. NTP-dependent helicase that catalyzes unidirectional unwinding of 3'tailed duplex RNAs and plays an important role during transcription of early mRNAs, presumably by preventing R-loop formation behind the elongating RNA polymerase. Might also play a role in the export of newly synthesized mRNA chains out of the core into the cytoplasm. Required for replication and propagation of viral particles. This chain is RNA helicase NPH-II (OPG084), found in Oryctolagus cuniculus (Rabbit).